Here is a 379-residue protein sequence, read N- to C-terminus: UDP-N-acetylglucosamine--N-acetylmuramyl-(pentapeptide) pyrophosphoryl-undecaprenol N-acetylglucosamine transferase (379 aa).

UDP-N-acetyl-alpha-D-glucosamine contacts are provided by residues Thr10–Gly12, Asn124, and Arg165. Residues Thr174 to Ala195 are disordered. 3 residues coordinate UDP-N-acetyl-alpha-D-glucosamine: Ser211, Ile266, and Gln311.

Belongs to the glycosyltransferase 28 family. MurG subfamily.

The protein resides in the cell inner membrane. It carries out the reaction di-trans,octa-cis-undecaprenyl diphospho-N-acetyl-alpha-D-muramoyl-L-alanyl-D-glutamyl-meso-2,6-diaminopimeloyl-D-alanyl-D-alanine + UDP-N-acetyl-alpha-D-glucosamine = di-trans,octa-cis-undecaprenyl diphospho-[N-acetyl-alpha-D-glucosaminyl-(1-&gt;4)]-N-acetyl-alpha-D-muramoyl-L-alanyl-D-glutamyl-meso-2,6-diaminopimeloyl-D-alanyl-D-alanine + UDP + H(+). Its pathway is cell wall biogenesis; peptidoglycan biosynthesis. Functionally, cell wall formation. Catalyzes the transfer of a GlcNAc subunit on undecaprenyl-pyrophosphoryl-MurNAc-pentapeptide (lipid intermediate I) to form undecaprenyl-pyrophosphoryl-MurNAc-(pentapeptide)GlcNAc (lipid intermediate II). The chain is UDP-N-acetylglucosamine--N-acetylmuramyl-(pentapeptide) pyrophosphoryl-undecaprenol N-acetylglucosamine transferase from Pelobacter propionicus (strain DSM 2379 / NBRC 103807 / OttBd1).